A 77-amino-acid polypeptide reads, in one-letter code: Apelin (77 aa).

An N-terminal signal peptide occupies residues 1 to 22 (MNLSFCVQALLLLWLSLTAVCG). Positions 23 to 41 (VPLMLPPDGKGLEEGNMRY) are excised as a propeptide. The disordered stretch occupies residues 45 to 77 (PRTSRTGPGAWQGGRRKFRRQRPRLSHKGPMPF). The segment covering 58–71 (GRRKFRRQRPRLSH) has biased composition (basic residues).

This sequence belongs to the apelin family. Several active peptides may be produced by proteolytic processing of the peptide precursor. In terms of tissue distribution, expressed in the lung, testis, ovary, uterus and mammary gland. Expressed in neurons in the thalamic paraventricular and hypothalamic supraoptic nuclei. The lung, testis and uterus mainly contain a large form that looks like apelin-36, whereas the mammary gland seems to contain 2 forms of apelin, a large form close to apelin-36 and a small form close to apelin-13 (at protein level). Widely expressed in the adult, with highest levels in the mammary gland of lactating animals, very high levels in the lung, intermediate levels in the spinal cord, ovary, adipose tissue, brain (neuronal cell bodies and fibers in the supraoptic and the paraventricular nuclei), heart and testis, and lowest levels in the pituitary gland, kidney, stomach, uterus and pancreas.

The protein resides in the secreted. Its subcellular location is the extracellular space. In terms of biological role, peptide hormone that functions as endogenous ligand for the G-protein-coupled apelin receptor (APLNR/APJ), that plays a role in cadiovascular homeostasis. Functions as a balanced agonist activating both G(i) protein pathway and beta-arrestin pathway of APLNR. Downstream G proteins activation, apelin can inhibit cAMP production and activate key intracellular effectors such as ERKs. On the other hand, APLNR activation induces beta-arrestin recruitment to the membrane leading to desensitization and internalization of the receptor. Apelin blunts cardiac hypertrophic induction from APLNR on response to pathological stimuli, but also induces myocardial hypertrophy under normal conditions. Apelin-36 dissociates more hardly than (pyroglu)apelin-13 from APLNR. Involved in the regulation of cardiac precursor cell movements during gastrulation and heart morphogenesis. Has an inhibitory effect on cytokine production in response to T-cell receptor/CD3 cross-linking; the oral intake of apelin in the colostrum and the milk might therefore modulate immune responses in neonates. Plays a role in early coronary blood vessels formation. Mediates myocardial contractility in an ERK1/2-dependent manner. May also have a role in the central control of body fluid homeostasis by influencing vasopressin release and drinking behavior. The protein is Apelin of Rattus norvegicus (Rat).